A 363-amino-acid polypeptide reads, in one-letter code: uncharacterized protein (363 aa).

This sequence belongs to the TelA family.

This is an uncharacterized protein from Bacillus subtilis (strain 168).